Consider the following 79-residue polypeptide: Putative transmembrane protein ORF17 (79 aa).

Transmembrane regions (helical) follow at residues 8–28 (LMIY…IMYY) and 50–70 (VFVM…TTTI).

The protein localises to the host membrane. In Haloarcula hispanica (His1V), this protein is Putative transmembrane protein ORF17.